The primary structure comprises 4760 residues: Nonribosomal peptide synthetase cm3A (4760 aa).

Residues 1–12 are compositionally biased toward polar residues; it reads MKHLASSENMPT. The interval 1-24 is disordered; it reads MKHLASSENMPTPAQDRAPSPSAM. The 77-residue stretch at 19-95 folds into the Carrier 1 domain; it reads PSPSAMQQEI…ELSRSAECQL (77 aa). Serine 56 is subject to O-(pantetheine 4'-phosphoryl)serine. 2 condensation regions span residues 142 to 570 and 178 to 571; these read QDIF…EIEQ and PGLS…IEQL. The adenylation 1 stretch occupies residues 591–984; it reads DEQARLCPDA…GRRDTQVKLR (394 aa). The region spanning 1120 to 1197 is the Carrier 2 domain; it reads REATTLQLQI…KLTEKLGVPE (78 aa). Serine 1158 carries the post-translational modification O-(pantetheine 4'-phosphoryl)serine. 2 condensation regions span residues 1210–1654 and 1689–2125; these read FPLS…KTPS and VEDM…NVTT. Residues 2171–2551 form an adenylation 2 region; it reads DGDLTYFELD…DRKDWQIKIR (381 aa). Positions 2684–2762 constitute a Carrier 3 domain; it reads LPSSETEKTV…ELAHAIDQRS (79 aa). An O-(pantetheine 4'-phosphoryl)serine modification is found at serine 2721. The interval 2811-3203 is condensation 4; the sequence is VEDIYPCTPL…RFKHIFGQLS (393 aa). Residues 3255–3647 are adenylation 3; it reads SATTPDRPAV…GRADQQLKIR (393 aa). In terms of domain architecture, Carrier 4 spans 3783 to 3857; sequence TRTEELMQSV…QLAQRATTDA (75 aa). Condensation regions lie at residues 3869–4296 and 4340–4757; these read EFRL…TLLC and EDIY…EEMG.

It belongs to the nrps family.

The protein operates within secondary metabolite biosynthesis. In terms of biological role, nonribosomal peptide synthetase; part of the gene cluster that mediates the biosynthesis of beauveriolides I and III, cyclodepsipeptides acting as inhibitors of the acyl-CoA:cholesterol acyltransferase. The HR-PKS cm3B initiates the biosynthesis of beauveriolides by iteratively catalyzing the formation of the linear polyketide chain. The ATP-dependent acetyl-CoA ligase cm3D converts the polyketide carboxylic acid to a CoA thioester which id shuttled to the first T domain in the NRPS cm3A by the acetyltransferase cm3C. Cm3A contains 13 domains and assembles the polyketide chain, L-phenylalanine, L-alanine, and D-leucine (or D-allo-isoleucine) to form beauveriolide I (or beauveriolide III). The production of both beauveriolides I and III suggests the substrate adaptability of cm3B, using different amino acids as substrates. This is Nonribosomal peptide synthetase cm3A from Cordyceps militaris (strain CM01) (Caterpillar fungus).